Reading from the N-terminus, the 556-residue chain is Outer spore wall assembly protein SHE10 (556 aa).

Positions 1–21 are cleaved as a signal peptide; sequence MRFLTKFLLFLATVYFGLKYA. Residues 135 to 201 are a coiled coil; sequence NKNLKRHVER…KQITSDVKKT (67 aa). Residues 190-208 are compositionally biased toward basic and acidic residues; it reads EAKQITSDVKKTVESEIKK. Disordered regions lie at residues 190–263 and 534–556; these read EAKQ…EDIT and RKEAGEVNESSEEEQIVEEPISA. The span at 220-244 shows a compositional bias: low complexity; that stretch reads IVSTSTIVKTITRTRHSSSSTTSTK. Over residues 245–256 the composition is skewed to basic and acidic residues; sequence SAEETSEKNLET. Residues 481–547 are a coiled coil; sequence KISEFKLLLD…GEVNESSEEE (67 aa).

The protein belongs to the SHE10 family. Component of the mitochondria-localized RNase mitochondrial RNA-processing (RNase MRP) composed of one single RNA encoded by the NME1 gene and at least 31 proteins. Absent in the nucleus-localized RNase MRP (NuMRP).

The protein localises to the mitochondrion. Its function is as follows. Involved in spore wall assembly. May be a component of the mitochondrial RNase MRP (MtMRP), a ribonucleoprotein endoribonuclease involved in the cleaving RNA transcripts to generate primers for DNA replication in mitochondria. The chain is Outer spore wall assembly protein SHE10 from Candida glabrata (strain ATCC 2001 / BCRC 20586 / JCM 3761 / NBRC 0622 / NRRL Y-65 / CBS 138) (Yeast).